The following is a 354-amino-acid chain: Uroporphyrinogen decarboxylase (354 aa).

Substrate is bound by residues 27 to 31, Asp-77, Tyr-154, Thr-209, and His-327; that span reads RQAGR.

Belongs to the uroporphyrinogen decarboxylase family. As to quaternary structure, homodimer.

The protein localises to the cytoplasm. It catalyses the reaction uroporphyrinogen III + 4 H(+) = coproporphyrinogen III + 4 CO2. It participates in porphyrin-containing compound metabolism; protoporphyrin-IX biosynthesis; coproporphyrinogen-III from 5-aminolevulinate: step 4/4. Catalyzes the decarboxylation of four acetate groups of uroporphyrinogen-III to yield coproporphyrinogen-III. The sequence is that of Uroporphyrinogen decarboxylase from Edwardsiella ictaluri (strain 93-146).